The sequence spans 220 residues: Vesicle-associated membrane protein 7 (220 aa).

A2 carries the post-translational modification N-acetylalanine; partial. Residues 2-188 (AILFAVVARG…ARAMCMKNLK (187 aa)) are Cytoplasmic-facing. The Longin domain maps to 7–110 (VVARGTTILA…AMNSEFSSVL (104 aa)). A v-SNARE coiled-coil homology domain is found at 125–185 (KVMETQAQVD…RNLARAMCMK (61 aa)). Residues S167 and S168 each carry the phosphoserine modification. The chain crosses the membrane as a helical; Anchor for type IV membrane protein span at residues 189–209 (LTIIIIIVSIVFIYIIVSPLC). At 210-220 (GGFTWPSCVKK) the chain is on the vesicular side.

This sequence belongs to the synaptobrevin family. Component of the SNARE complex composed of STX4, SNAP23 and VAMP7 that binds SYT7 during lysosomal exocytosis. Component of the SNARE complex composed of STX7, STX8, VAMP7 and VTI1B that is required for heterotypic fusion of late endosomes with lysosomes. May interact with STX17. Interacts with PICALM. Interacts with RAB21. Detected in all tissues tested.

The protein resides in the cytoplasmic vesicle. It is found in the secretory vesicle membrane. It localises to the golgi apparatus. The protein localises to the trans-Golgi network membrane. Its subcellular location is the late endosome membrane. The protein resides in the lysosome membrane. It is found in the endoplasmic reticulum membrane. It localises to the phagosome membrane. The protein localises to the synapse. Its subcellular location is the synaptosome. Its function is as follows. Involved in the targeting and/or fusion of transport vesicles to their target membrane during transport of proteins from the early endosome to the lysosome. Required for heterotypic fusion of late endosomes with lysosomes and homotypic lysosomal fusion. Required for calcium regulated lysosomal exocytosis. Involved in the export of chylomicrons from the endoplasmic reticulum to the cis Golgi. Required for exocytosis of mediators during eosinophil and neutrophil degranulation, and target cell killing by natural killer cells. Required for focal exocytosis of late endocytic vesicles during phagosome formation. This Homo sapiens (Human) protein is Vesicle-associated membrane protein 7 (VAMP7).